The primary structure comprises 230 residues: Acyl-protein thioesterase 1 (230 aa).

Active-site charge relay system residues include S119, D174, and H208. K224 carries the N6-acetyllysine modification.

It belongs to the AB hydrolase superfamily. AB hydrolase 2 family. As to quaternary structure, homodimer.

Its subcellular location is the cytoplasm. The protein localises to the cell membrane. It is found in the nucleus membrane. The protein resides in the endoplasmic reticulum. The catalysed reaction is S-hexadecanoyl-L-cysteinyl-[protein] + H2O = L-cysteinyl-[protein] + hexadecanoate + H(+). It catalyses the reaction 1-hexadecanoyl-sn-glycero-3-phosphocholine + H2O = sn-glycerol 3-phosphocholine + hexadecanoate + H(+). It carries out the reaction a 1-(9Z-octadecenoyl)-2-acyl-sn-glycero-3-phosphocholine + H2O = a 2-acyl-sn-glycero-3-phosphocholine + (9Z)-octadecenoate + H(+). Its function is as follows. Acts as an acyl-protein thioesterase. Hydrolyzes fatty acids from S-acylated cysteine residues in proteins such as trimeric G alpha proteins or HRAS. Acts as a palmitoyl thioesterase that catalyzes depalmitoylation of proteins, such as ADRB2, KCNMA1 and SQSTM1. Acts as a negative regulator of autophagy by mediating palmitoylation of SQSTM1, decreasing affinity between SQSTM1 and ATG8 proteins and recruitment of ubiquitinated cargo proteins to autophagosomes. Acts as a lysophospholipase and hydrolyzes lysophosphatidylcholine (lyso-PC). Also hydrolyzes lysophosphatidylethanolamine (lyso-PE), lysophosphatidylinositol (lyso-PI) and lysophosphatidylserine (lyso-PS). Has much higher thioesterase activity than lysophospholipase activity. Contributes to the production of lysophosphatidic acid (LPA) during blood coagulation by recognizing and cleaving plasma phospholipids to generate lysophospholipids which in turn act as substrates for ENPP2 to produce LPA. The chain is Acyl-protein thioesterase 1 (LYPLA1) from Pongo abelii (Sumatran orangutan).